Here is a 419-residue protein sequence, read N- to C-terminus: Zinc metalloprotease RasP (419 aa).

Helical transmembrane passes span 4 to 24 (VIAFILIFGTLVFFHELGHLI), 173 to 193 (IAAGPIMNFILAYVILVMLGL), 349 to 369 (LAAFLSINLGIVNLLPIPALD), and 391 to 411 (EAFVVFIGVAFLMLLMLVVTW). Residue His-18 coordinates Zn(2+). Residue Glu-19 is part of the active site. His-22 contributes to the Zn(2+) binding site. In terms of domain architecture, PDZ spans 184–269 (AYVILVMLGL…KLTKYVTPEA (86 aa)).

It belongs to the peptidase M50B family. It depends on Zn(2+) as a cofactor.

Its subcellular location is the cell membrane. Functionally, is responsible for Site-2 cleavage of the RsiW anti-sigma factor. This results, after a third proteolytic step catalyzed by the ClpXP protease, in the release of SigW and the transcription activation of the genes under the control of the sigma-W factor. This Bacillus licheniformis (strain ATCC 14580 / DSM 13 / JCM 2505 / CCUG 7422 / NBRC 12200 / NCIMB 9375 / NCTC 10341 / NRRL NRS-1264 / Gibson 46) protein is Zinc metalloprotease RasP (rasP).